Reading from the N-terminus, the 82-residue chain is MKPSWFPCLVFLCMLLLSALGGRKNKYYPGELLLEECWGQPKTNDCVKKCSRTFKCVYRNHTCCWTYCGNICAENGKFFERK.

The N-terminal stretch at 1-21 (MKPSWFPCLVFLCMLLLSALG) is a signal peptide.

It is found in the secreted. The chain is Protein WFDC11 (Wfdc11) from Mus musculus (Mouse).